A 274-amino-acid polypeptide reads, in one-letter code: Kit ligand (274 aa).

The signal sequence occupies residues Met-1–Thr-25. Gln-26 is modified (pyrrolidone carboxylic acid). At Gln-26–Gln-215 the chain is on the extracellular side. Disulfide bonds link Cys-29–Cys-114 and Cys-68–Cys-164. Asn-90, Asn-145, and Asn-196 each carry an N-linked (GlcNAc...) asparagine glycan. A helical membrane pass occupies residues Trp-216 to Trp-238. Over Lys-239–Val-274 the chain is Cytoplasmic.

This sequence belongs to the SCF family. In terms of assembly, homodimer, non-covalently linked. Post-translationally, a soluble form is produced by proteolytic processing of isoform 1 in the extracellular domain.

Its subcellular location is the cell membrane. It localises to the cytoplasm. The protein resides in the cytoskeleton. The protein localises to the cell projection. It is found in the lamellipodium. Its subcellular location is the filopodium. It localises to the secreted. Stimulates the proliferation of mast cells. Able to augment the proliferation of both myeloid and lymphoid hematopoietic progenitors in bone marrow culture. Also mediates cell-cell adhesion. Acts synergistically with other cytokines, probably interleukins. The sequence is that of Kit ligand (KITLG) from Bos taurus (Bovine).